We begin with the raw amino-acid sequence, 336 residues long: Ketol-acid reductoisomerase (NADP(+)) 1 (336 aa).

The KARI N-terminal Rossmann domain maps to 2-181; sequence AKVYYEKDVT…GATRAGVLET (180 aa). Residues 25–28, Arg48, Ser52, and 82–85 each bind NADP(+); these read YGSQ and DELQ. Residue His107 is part of the active site. Gly133 is an NADP(+) binding site. The 146-residue stretch at 182–327 folds into the KARI C-terminal knotted domain; that stretch reads TFKEETETDL…RKLREMMPFV (146 aa). Mg(2+)-binding residues include Asp190, Glu194, Glu226, and Glu230. Ser251 is a binding site for substrate.

It belongs to the ketol-acid reductoisomerase family. Mg(2+) is required as a cofactor.

The enzyme catalyses (2R)-2,3-dihydroxy-3-methylbutanoate + NADP(+) = (2S)-2-acetolactate + NADPH + H(+). It catalyses the reaction (2R,3R)-2,3-dihydroxy-3-methylpentanoate + NADP(+) = (S)-2-ethyl-2-hydroxy-3-oxobutanoate + NADPH + H(+). It participates in amino-acid biosynthesis; L-isoleucine biosynthesis; L-isoleucine from 2-oxobutanoate: step 2/4. The protein operates within amino-acid biosynthesis; L-valine biosynthesis; L-valine from pyruvate: step 2/4. Functionally, involved in the biosynthesis of branched-chain amino acids (BCAA). Catalyzes an alkyl-migration followed by a ketol-acid reduction of (S)-2-acetolactate (S2AL) to yield (R)-2,3-dihydroxy-isovalerate. In the isomerase reaction, S2AL is rearranged via a Mg-dependent methyl migration to produce 3-hydroxy-3-methyl-2-ketobutyrate (HMKB). In the reductase reaction, this 2-ketoacid undergoes a metal-dependent reduction by NADPH to yield (R)-2,3-dihydroxy-isovalerate. The protein is Ketol-acid reductoisomerase (NADP(+)) 1 of Bacillus cereus (strain ZK / E33L).